The following is a 135-amino-acid chain: uncharacterized protein (135 aa).

This is an uncharacterized protein from Homo sapiens (Human).